The sequence spans 168 residues: Secretory-abundant heat soluble protein 33020 (168 aa).

An N-terminal signal peptide occupies residues 1 to 19 (MARFLVALALFGVVAMTAA). Residues 26-57 (EWSGKPWLGKFVAEVSDKSENWEAFVDALGLP) form an SAHS-c1 region. Residues 72-100 (YKQGEHYHHILSLPDKNINKDIEFTLGQE) form an SAHS-c2 region. The SAHS-c3 stretch occupies residues 113–162 (KYFEDGNKLVADVSIPAKGKSIHDVYDVQGDQLIKSYKVGDVVAKKWFKK).

This sequence belongs to the Secretory-abundant heat soluble protein (SAHS) family.

It localises to the secreted. Functionally, secreted heat soluble protein acting as a molecular shield in water-deficient condition. Tardigrade-specific intrinsically disordered proteins (TDPs) are essential for desiccation tolerance by forming non-crystalline amorphous solids upon desiccation, and this vitrified state mirrors their protective capabilities. This chain is Secretory-abundant heat soluble protein 33020, found in Hypsibius exemplaris (Freshwater tardigrade).